A 254-amino-acid chain; its full sequence is 3-oxo-5-alpha-steroid 4-dehydrogenase 2 (254 aa).

4 helical membrane passes run 8–28, 72–92, 146–166, and 206–226; these read VPVL…LCFG, PRSL…AHYF, FSVG…SDCM, and LATW…FLGM.

It belongs to the steroid 5-alpha reductase family.

It is found in the microsome membrane. The protein resides in the endoplasmic reticulum membrane. The enzyme catalyses a 3-oxo-5alpha-steroid + NADP(+) = a 3-oxo-Delta(4)-steroid + NADPH + H(+). It catalyses the reaction 17beta-hydroxy-5alpha-androstan-3-one + NADP(+) = testosterone + NADPH + H(+). It carries out the reaction 5alpha-pregnane-3,20-dione + NADP(+) = progesterone + NADPH + H(+). Functionally, converts testosterone (T) into 5-alpha-dihydrotestosterone (DHT) and progesterone or corticosterone into their corresponding 5-alpha-3-oxosteroids. It plays a central role in sexual differentiation and androgen physiology. The chain is 3-oxo-5-alpha-steroid 4-dehydrogenase 2 (Srd5a2) from Mus musculus (Mouse).